The following is a 100-amino-acid chain: Tuberoinfundibular peptide of 39 residues (100 aa).

Residues 1 to 30 (METRQVSRSPRVRLLLLLLLLLVVPWGVRT) form the signal peptide. Positions 31-59 (ASGVALPPVGVLSLRPPGRAWADPATPRP) are excised as a propeptide.

Belongs to the parathyroid hormone family. Ligand of high affinity for the PTH2 receptor (PTH2R).

The protein resides in the secreted. Plays a role as a potent and selective agonist of PTH2R resulting in adenyl cyclase activation and intracellular calcium levels elevation. Induces protein kinase C beta activation, recruitment of beta-arrestin and PTH2R internalization. May inhibit cell proliferation via its action of PTH2R activation. Neuropeptide which may also have a role in spermatogenesis. May activate nociceptors and nociceptive circuits. This is Tuberoinfundibular peptide of 39 residues (PTH2) from Bos taurus (Bovine).